Here is a 745-residue protein sequence, read N- to C-terminus: MAQKLEAKGGKGGNQWDDLLDHDNIAKIHVQGGHEGIQYVKFDYVKFDNLKIGQPKLGSIHGLSRKGFTQTFEIDPTSEYIVSVEGYYDESKGIIQALKFKTNKKTSDMIGYDENGLKFSLEVKGKAIIGFHGFADTNLNSLGAYFAPAPPTKFDYQGGSGAQLWDDGSNYNGVRKVSFSLDDTEIRQIRIEYDKSGLVEKREYGSNVGRQEEFVLDYPTEYIIYMEGTCDIVSDTSKNRVRSLMFKTSKGRTSPIFGKVAARKFVFESNGSALIGFHGRAAAAVDAIGAYFSPLILSAPAPPPPPAEKLQAKGGNGGNQWDDLADHDHVTKIYVQGGQEGIQYVKFDYVKNGQPQSGSVHGLLGRGFTQTFEIDPTNEHLVSVEGYYDESKGLVQGLKFKTNKKTSDMIGYDENGLKFSLEVNGKKIIGFHGYAQTYLNSLGAYFVTAPPTKFDYQGGSGAQLWDDGTNYNGVRKISFALDANEIRQIRIDYDKGGLIERREYGGNVGRQEEFVVDYPSEYIIYMEGTCDIVSDASKNRVRSLMFKTSKGRTSPIFGKVAARKFVFESNGSALIGFHGRAAAAVDAIGAYFSRFILPPSAETLQAKGGEGGDPWSDGVFNGVRNIYVGQGENGVSAVKFVYDKDSQVAEGNDHGKPTLLGYEEFKLEYPSEYITTVEGCFDKIFGSGGGVITMLKFKTNKRTSPPFGLETTSNFVLGKEGYKIVGFHGTSSHELHQLGVYVMPI.

5 Jacalin-type lectin domains span residues 2 to 148 (AQKL…YFAP), 151 to 294 (PTKF…YFSP), 307 to 448 (AEKL…YFVT), 451 to 594 (PTKF…YFSR), and 601 to 744 (AETL…YVMP).

This sequence belongs to the jacalin lectin family.

The protein is Jacalin-related lectin 4 (JAL4) of Arabidopsis thaliana (Mouse-ear cress).